Reading from the N-terminus, the 177-residue chain is Disulfide bond formation protein B (177 aa).

The Cytoplasmic portion of the chain corresponds to 1-14 (MMVWNWIDRTPRRV). Residues 15-31 (LALISLACVALLACGLY) form a helical membrane-spanning segment. At 32-49 (LQHVVGLVPCPMCIVQRY) the chain is on the periplasmic side. Cys41 and Cys44 are disulfide-bonded. The helical transmembrane segment at 50 to 64 (ALIGLALLTGLASAR) threads the bilayer. At 65 to 70 (SAKGWW) the chain is on the cytoplasmic side. A helical transmembrane segment spans residues 71–89 (LTLSALAALTAGFGATVAA). The Periplasmic portion of the chain corresponds to 90–145 (RQSWLQWYPPQSVSCGRDFYGMIESFPLSRAIPMILRGSGDCAAVDWSLLGGSIAN). A disulfide bond links Cys104 and Cys131. Residues 146–164 (WSFLCFALLGLLLLALLAR) traverse the membrane as a helical segment. Residues 165-177 (GVRGARQRAPAPV) lie on the Cytoplasmic side of the membrane.

Belongs to the DsbB family.

It localises to the cell inner membrane. Required for disulfide bond formation in some periplasmic proteins. Acts by oxidizing the DsbA protein. The polypeptide is Disulfide bond formation protein B (Verminephrobacter eiseniae (strain EF01-2)).